A 104-amino-acid chain; its full sequence is L-rhamnose mutarotase (104 aa).

Tyr18 serves as a coordination point for substrate. The Proton donor role is filled by His22. Substrate is bound by residues Tyr41 and 76-77 (WW).

Belongs to the rhamnose mutarotase family. In terms of assembly, homodimer.

The protein localises to the cytoplasm. The enzyme catalyses alpha-L-rhamnose = beta-L-rhamnose. It participates in carbohydrate metabolism; L-rhamnose metabolism. Its function is as follows. Involved in the anomeric conversion of L-rhamnose. This Escherichia coli O7:K1 (strain IAI39 / ExPEC) protein is L-rhamnose mutarotase.